The chain runs to 46 residues: Protein PsbN (46 aa).

Residues 10 to 30 (IAITILIVLLGLTAFGVYTAF) traverse the membrane as a helical segment.

The protein belongs to the PsbN family.

It is found in the cellular thylakoid membrane. Functionally, may play a role in photosystem I and II biogenesis. This Prochlorococcus marinus (strain SARG / CCMP1375 / SS120) protein is Protein PsbN.